A 28-amino-acid polypeptide reads, in one-letter code: leu operon leader peptide (28 aa).

Functionally, involved in control of the biosynthesis of leucine. This Salmonella typhi protein is leu operon leader peptide (leuL).